Reading from the N-terminus, the 236-residue chain is 1-(5-phosphoribosyl)-5-[(5-phosphoribosylamino)methylideneamino] imidazole-4-carboxamide isomerase (236 aa).

Asp-8 serves as the catalytic Proton acceptor. The Proton donor role is filled by Asp-129.

This sequence belongs to the HisA/HisF family.

The protein localises to the cytoplasm. It carries out the reaction 1-(5-phospho-beta-D-ribosyl)-5-[(5-phospho-beta-D-ribosylamino)methylideneamino]imidazole-4-carboxamide = 5-[(5-phospho-1-deoxy-D-ribulos-1-ylimino)methylamino]-1-(5-phospho-beta-D-ribosyl)imidazole-4-carboxamide. Its pathway is amino-acid biosynthesis; L-histidine biosynthesis; L-histidine from 5-phospho-alpha-D-ribose 1-diphosphate: step 4/9. The sequence is that of 1-(5-phosphoribosyl)-5-[(5-phosphoribosylamino)methylideneamino] imidazole-4-carboxamide isomerase from Methanospirillum hungatei JF-1 (strain ATCC 27890 / DSM 864 / NBRC 100397 / JF-1).